Here is a 347-residue protein sequence, read N- to C-terminus: MKPPILTIIMSTVISGTIMVLISSHWLTVWIGFEMNMLAIVPILMKKFNPRAMEASTKYFLTQATASMLLMLGIIINLLLTGQWTVLNMPNPIASNTMTVALAMKLGLSPFHFWVPEVTQGVPLSSGMILLTWQKIAPLSILYQISPSTNPNLLMTMAALSVLVGGWGGLNQTQLRKILAYSSIAHMGWMIAVTTYNPTLMMLNLAIYIMMTLGTFMLFMLNSSTTTLSLSHVWNKLPLTTSLILMIMLSLGGLPPLSGFIPKWMIIHELTKNNMIIMATFMAITALLNLYFYMRLTYATALTMFPSTNIMKMKWQFENTKNTTLLPPLIVISTMLLPLTPMMLSLF.

A run of 9 helical transmembrane segments spans residues 5–22, 26–45, 60–80, 150–170, 178–198, 200–220, 242–262, 274–294, and 324–344; these read ILTI…MVLI, WLTV…PILM, FLTQ…NLLL, NPNL…WGGL, ILAY…TYNP, LMML…MLFM, SLIL…GFIP, NMII…YFYM, and TLLP…PMML.

This sequence belongs to the complex I subunit 2 family. Core subunit of respiratory chain NADH dehydrogenase (Complex I) which is composed of 45 different subunits. Interacts with TMEM242.

The protein resides in the mitochondrion inner membrane. It carries out the reaction a ubiquinone + NADH + 5 H(+)(in) = a ubiquinol + NAD(+) + 4 H(+)(out). Functionally, core subunit of the mitochondrial membrane respiratory chain NADH dehydrogenase (Complex I) which catalyzes electron transfer from NADH through the respiratory chain, using ubiquinone as an electron acceptor. Essential for the catalytic activity and assembly of complex I. This is NADH-ubiquinone oxidoreductase chain 2 from Martes flavigula (Yellow-throated marten).